Reading from the N-terminus, the 225-residue chain is MEPIKNIPRLCRTLGYEFAEQALLDQALTHRSASNKHNERLEFLGDSILSIVISDALYHQFPKATEGDLSRMRATLVCGKMLAEIAIEFKLGDYLKLGPGELKSGGFRRESILADAVEAIIGAIYLDSDIEKCRKLVLNWYASRLRVIEPINQKDPKTLLQEHLQKFRKPLPIYKVVHTEGDAHEQTFTVECVVEDLRQAVVGVASSRRKAEQSAAAQVLELIKK.

Residues 7–129 form the RNase III domain; the sequence is IPRLCRTLGY…IIGAIYLDSD (123 aa). Glu-42 contacts Mg(2+). Residue Asp-46 is part of the active site. Mg(2+) contacts are provided by Asp-115 and Glu-118. Glu-118 is an active-site residue. The region spanning 155–225 is the DRBM domain; sequence DPKTLLQEHL…AAQVLELIKK (71 aa).

This sequence belongs to the ribonuclease III family. In terms of assembly, homodimer. The cofactor is Mg(2+).

The protein localises to the cytoplasm. The catalysed reaction is Endonucleolytic cleavage to 5'-phosphomonoester.. Functionally, digests double-stranded RNA. Involved in the processing of primary rRNA transcript to yield the immediate precursors to the large and small rRNAs (23S and 16S). Processes some mRNAs, and tRNAs when they are encoded in the rRNA operon. Processes pre-crRNA and tracrRNA of type II CRISPR loci if present in the organism. The sequence is that of Ribonuclease 3 from Shewanella piezotolerans (strain WP3 / JCM 13877).